The sequence spans 462 residues: tRNA(Ile)-lysidine synthase (462 aa).

An ATP-binding site is contributed by serine 27–serine 32.

Belongs to the tRNA(Ile)-lysidine synthase family.

The protein resides in the cytoplasm. It carries out the reaction cytidine(34) in tRNA(Ile2) + L-lysine + ATP = lysidine(34) in tRNA(Ile2) + AMP + diphosphate + H(+). In terms of biological role, ligates lysine onto the cytidine present at position 34 of the AUA codon-specific tRNA(Ile) that contains the anticodon CAU, in an ATP-dependent manner. Cytidine is converted to lysidine, thus changing the amino acid specificity of the tRNA from methionine to isoleucine. This is tRNA(Ile)-lysidine synthase from Clostridioides difficile (strain 630) (Peptoclostridium difficile).